A 619-amino-acid chain; its full sequence is Dihydroxy-acid dehydratase (619 aa).

Asp-80 contacts Mg(2+). Cys-121 contributes to the [2Fe-2S] cluster binding site. Mg(2+)-binding residues include Asp-122 and Lys-123. An N6-carboxylysine modification is found at Lys-123. Cys-196 contributes to the [2Fe-2S] cluster binding site. Glu-492 contributes to the Mg(2+) binding site. The Proton acceptor role is filled by Ser-518.

It belongs to the IlvD/Edd family. Homodimer. [2Fe-2S] cluster serves as cofactor. Requires Mg(2+) as cofactor.

The enzyme catalyses (2R)-2,3-dihydroxy-3-methylbutanoate = 3-methyl-2-oxobutanoate + H2O. It catalyses the reaction (2R,3R)-2,3-dihydroxy-3-methylpentanoate = (S)-3-methyl-2-oxopentanoate + H2O. Its pathway is amino-acid biosynthesis; L-isoleucine biosynthesis; L-isoleucine from 2-oxobutanoate: step 3/4. The protein operates within amino-acid biosynthesis; L-valine biosynthesis; L-valine from pyruvate: step 3/4. Functions in the biosynthesis of branched-chain amino acids. Catalyzes the dehydration of (2R,3R)-2,3-dihydroxy-3-methylpentanoate (2,3-dihydroxy-3-methylvalerate) into 2-oxo-3-methylpentanoate (2-oxo-3-methylvalerate) and of (2R)-2,3-dihydroxy-3-methylbutanoate (2,3-dihydroxyisovalerate) into 2-oxo-3-methylbutanoate (2-oxoisovalerate), the penultimate precursor to L-isoleucine and L-valine, respectively. This is Dihydroxy-acid dehydratase from Bifidobacterium adolescentis (strain ATCC 15703 / DSM 20083 / NCTC 11814 / E194a).